The following is a 75-amino-acid chain: Guanine nucleotide-binding protein G(I)/G(S)/G(O) subunit gamma-4 (75 aa).

A Cysteine methyl ester modification is found at Cys-72. Cys-72 carries the S-geranylgeranyl cysteine lipid modification. The propeptide at 73–75 (TIL) is removed in mature form.

It belongs to the G protein gamma family. G proteins are composed of 3 units, alpha, beta and gamma. Interacts with beta-1 and beta-2, but not with beta-3. Interacts with KCNK1. Interacts (via C-terminus) with KCNK2/TREK-1 (via N-terminus); this interaction confers ion selectivity to Cl(-) and L-glutamate. As to expression, brain, kidney, pancreas, skeletal muscle and faintly in cardiac muscle.

The protein localises to the cell membrane. Guanine nucleotide-binding proteins (G proteins) are involved as a modulator or transducer in various transmembrane signaling systems. The beta and gamma chains are required for the GTPase activity, for replacement of GDP by GTP, and for G protein-effector interaction. This is Guanine nucleotide-binding protein G(I)/G(S)/G(O) subunit gamma-4 (GNG4) from Homo sapiens (Human).